Here is a 233-residue protein sequence, read N- to C-terminus: Small ribosomal subunit protein uS3 (233 aa).

The region spanning 39–107 is the KH type-2 domain; it reads IRAFLKRKLY…DVNINIKEER (69 aa). A compositionally biased stretch (basic and acidic residues) spans 212-222; the sequence is MQPEKTEESAP. The segment at 212-233 is disordered; it reads MQPEKTEESAPAKKSRRTRRGK. Residues 224–233 are compositionally biased toward basic residues; sequence KKSRRTRRGK.

The protein belongs to the universal ribosomal protein uS3 family. Part of the 30S ribosomal subunit. Forms a tight complex with proteins S10 and S14.

Its function is as follows. Binds the lower part of the 30S subunit head. Binds mRNA in the 70S ribosome, positioning it for translation. In Campylobacter jejuni subsp. doylei (strain ATCC BAA-1458 / RM4099 / 269.97), this protein is Small ribosomal subunit protein uS3.